A 560-amino-acid chain; its full sequence is Formate--tetrahydrofolate ligase (560 aa).

69–76 (TPAGEGKS) is a binding site for ATP.

It belongs to the formate--tetrahydrofolate ligase family.

It catalyses the reaction (6S)-5,6,7,8-tetrahydrofolate + formate + ATP = (6R)-10-formyltetrahydrofolate + ADP + phosphate. Its pathway is one-carbon metabolism; tetrahydrofolate interconversion. This is Formate--tetrahydrofolate ligase from Listeria innocua serovar 6a (strain ATCC BAA-680 / CLIP 11262).